Reading from the N-terminus, the 556-residue chain is Urocanate hydratase (556 aa).

Residues Gly52–Gly53, Gln130, Gly176–Gly178, Glu196, Arg201, Asn242–Ala243, Gln263–His267, Tyr273–Leu274, and Tyr322 contribute to the NAD(+) site. Residue Cys410 is part of the active site. Gly492 provides a ligand contact to NAD(+).

The protein belongs to the urocanase family. NAD(+) serves as cofactor.

The protein resides in the cytoplasm. It carries out the reaction 4-imidazolone-5-propanoate = trans-urocanate + H2O. Its pathway is amino-acid degradation; L-histidine degradation into L-glutamate; N-formimidoyl-L-glutamate from L-histidine: step 2/3. Catalyzes the conversion of urocanate to 4-imidazolone-5-propionate. The sequence is that of Urocanate hydratase from Shewanella piezotolerans (strain WP3 / JCM 13877).